The primary structure comprises 239 residues: Ribonuclease PH (239 aa).

Residues Arg-86 and 124-126 (GTR) each bind phosphate.

It belongs to the RNase PH family. As to quaternary structure, homohexameric ring arranged as a trimer of dimers.

It carries out the reaction tRNA(n+1) + phosphate = tRNA(n) + a ribonucleoside 5'-diphosphate. In terms of biological role, phosphorolytic 3'-5' exoribonuclease that plays an important role in tRNA 3'-end maturation. Removes nucleotide residues following the 3'-CCA terminus of tRNAs; can also add nucleotides to the ends of RNA molecules by using nucleoside diphosphates as substrates, but this may not be physiologically important. Probably plays a role in initiation of 16S rRNA degradation (leading to ribosome degradation) during starvation. This is Ribonuclease PH from Psychromonas ingrahamii (strain DSM 17664 / CCUG 51855 / 37).